A 1015-amino-acid chain; its full sequence is Proline-rich basic protein 1 (1015 aa).

Disordered regions lie at residues 1–111, 139–164, 196–236, 259–460, 488–678, 690–883, and 991–1015; these read MLTA…SGEM, AFIS…PDGG, GAAP…RTGS, LSPE…ILSQ, DAVE…APAH, VVPH…GKVL, and PPLL…LFPL. Residues 84–94 show a composition bias toward gly residues; the sequence is PGSGFPRGPGS. Residues 220–233 show a composition bias toward low complexity; it reads PRAAGAPRPRLLLR. Over residues 267–276 the composition is skewed to polar residues; it reads SSATFGSTGR. Basic and acidic residues-rich tracts occupy residues 277–304, 318–328, and 346–367; these read SEPE…RVRD, LRERAIRRDKP, and SEEK…DRTV. The span at 380–391 shows a compositional bias: low complexity; sequence PSEVPSRAVRPR. A compositionally biased stretch (polar residues) spans 531–542; sequence IAFTQEAQNGLT. Pro residues-rich tracts occupy residues 548–557 and 691–700; these read PPTPSAPGTP and VPHPYEPPEP. Residues 759–774 show a composition bias toward basic and acidic residues; the sequence is ENRDVEAQRLVPDGDG. Residues 813–825 are compositionally biased toward pro residues; it reads GIAPKPKTPPTAP. Low complexity-rich tracts occupy residues 826–835 and 847–858; these read EPAAAVQAPL and APAQPRAASAPP. Residues 861-870 are compositionally biased toward polar residues; it reads RSPQSPSQGA. The segment covering 993–1004 has biased composition (low complexity); sequence LLLCAPPSSSGP.

This is Proline-rich basic protein 1 (PROB1) from Homo sapiens (Human).